An 83-amino-acid polypeptide reads, in one-letter code: Defensin-2 (83 aa).

Residues 1-33 form the signal peptide; sequence MAGKGVGTPLSALFLLVLLVVTIGMMEVQVAEG. 4 cysteine pairs are disulfide-bonded: Cys-36-Cys-82, Cys-47-Cys-67, Cys-53-Cys-76, and Cys-57-Cys-78.

The protein belongs to the DEFL family.

It localises to the secreted. Plant defense peptide. Has antifungal activity. This chain is Defensin-2, found in Pinus sylvestris (Scotch pine).